Reading from the N-terminus, the 96-residue chain is Co-chaperonin GroES (96 aa).

This sequence belongs to the GroES chaperonin family. In terms of assembly, heptamer of 7 subunits arranged in a ring. Interacts with the chaperonin GroEL.

The protein localises to the cytoplasm. In terms of biological role, together with the chaperonin GroEL, plays an essential role in assisting protein folding. The GroEL-GroES system forms a nano-cage that allows encapsulation of the non-native substrate proteins and provides a physical environment optimized to promote and accelerate protein folding. GroES binds to the apical surface of the GroEL ring, thereby capping the opening of the GroEL channel. This Actinobacillus pleuropneumoniae serotype 7 (strain AP76) protein is Co-chaperonin GroES.